Consider the following 21-residue polypeptide: Misgurin (21 aa).

A disordered region spans residues 1–21; the sequence is RQRVEELSKFSKKGAAARRRK. The span at 10-21 shows a compositional bias: basic residues; that stretch reads FSKKGAAARRRK.

It localises to the secreted. Strong antimicrobial activity against several Gram-positive and Gram-negative bacteria and fungi. In Misgurnus anguillicaudatus (Oriental weatherloach), this protein is Misgurin.